The following is a 513-amino-acid chain: Maturase K (513 aa).

This sequence belongs to the intron maturase 2 family. MatK subfamily.

Its subcellular location is the plastid. The protein resides in the chloroplast. In terms of biological role, usually encoded in the trnK tRNA gene intron. Probably assists in splicing its own and other chloroplast group II introns. The protein is Maturase K of Sporobolus indicus (Smut grass).